We begin with the raw amino-acid sequence, 212 residues long: NADH-quinone oxidoreductase subunit I (212 aa).

4Fe-4S ferredoxin-type domains follow at residues 76 to 105 (RLLE…IITD) and 115 to 144 (LNYS…HGDL). The [4Fe-4S] cluster site is built by Cys-85, Cys-88, Cys-91, Cys-95, Cys-124, Cys-127, Cys-130, and Cys-134.

This sequence belongs to the complex I 23 kDa subunit family. NDH-1 is composed of 14 different subunits. Subunits NuoA, H, J, K, L, M, N constitute the membrane sector of the complex. [4Fe-4S] cluster is required as a cofactor.

Its subcellular location is the cell inner membrane. The catalysed reaction is a quinone + NADH + 5 H(+)(in) = a quinol + NAD(+) + 4 H(+)(out). In terms of biological role, NDH-1 shuttles electrons from NADH, via FMN and iron-sulfur (Fe-S) centers, to quinones in the respiratory chain. The immediate electron acceptor for the enzyme in this species is believed to be ubiquinone. Couples the redox reaction to proton translocation (for every two electrons transferred, four hydrogen ions are translocated across the cytoplasmic membrane), and thus conserves the redox energy in a proton gradient. The polypeptide is NADH-quinone oxidoreductase subunit I (Helicobacter hepaticus (strain ATCC 51449 / 3B1)).